Reading from the N-terminus, the 362-residue chain is Notoamide biosynthesis cluster protein J' (362 aa).

The N-terminal stretch at 1–22 (MRNMATMLHLLTLILLTSPAST) is a signal peptide. N-linked (GlcNAc...) asparagine glycans are attached at residues asparagine 157, asparagine 190, asparagine 280, and asparagine 338.

In terms of biological role, part of the gene cluster that mediates the biosynthesis of notoamide, a fungal indole alkaloid that belongs to a family of natural products containing a characteristic bicyclo[2.2.2]diazaoctane core. The first step of notoamide biosynthesis involves coupling of L-proline and L-tryptophan by the bimodular NRPS notE', to produce cyclo-L-tryptophan-L-proline called brevianamide F. The reverse prenyltransferase notF' then acts as a deoxybrevianamide E synthase and converts brevianamide F to deoxybrevianamide E via reverse prenylation at C-2 of the indole ring leading to the bicyclo[2.2.2]diazaoctane core. Deoxybrevianamide E is further hydroxylated at C-6 of the indole ring, likely catalyzed by the cytochrome P450 monooxygenase notG', to yield 6-hydroxy-deoxybrevianamide E. 6-hydroxy-deoxybrevianamide E is a specific substrate of the prenyltransferase notC' for normal prenylation at C-7 to produce 6-hydroxy-7-prenyl-deoxybrevianamide, also called notoamide S. As the proposed pivotal branching point in notoamide biosynthesis, notoamide S can be diverted to notoamide E through an oxidative pyran ring closure putatively catalyzed by either notH' cytochrome P450 monooxygenase or the notD' FAD-linked oxidoreductase. This step would be followed by an indole 2,3-epoxidation-initiated pinacol-like rearrangement catalyzed by the notB' FAD-dependent monooxygenase leading to the formation of notoamide C and notoamide D. On the other hand notoamide S is converted to notoamide T by notH' (or notD'), a bifunctional oxidase that also functions as the intramolecular Diels-Alderase responsible for generation of (-)-notoamide T. To generate antipodal (+)-notoaminide T, notH (or notD) in Aspergillus strain MF297-2 is expected to catalyze a Diels-Alder reaction leading to the opposite stereochemistry. The remaining oxidoreductase notD' (or notH') likely catalyzes the oxidative pyran ring formation to yield (-)-stephacidin A. The FAD-dependent monooxygenase notI' is highly similar to notB' and is predicted to catalyze a similar conversion from (-)-stephacidin A to (+)-notoamide B via the 2,3-epoxidation of (-)-stephacidin A followed by a pinacol-type rearrangement. Finally, it remains unclear which enzyme could be responsible for the final hydroxylation steps leading to notoamide A and sclerotiamide. The function of notJ' in the notoamide biosynthesis has not been determined yet. The polypeptide is Notoamide biosynthesis cluster protein J' (Aspergillus versicolor).